The primary structure comprises 763 residues: Ras and Rab interactor 1 (763 aa).

At methionine 1 the chain carries N-acetylmethionine. A disordered region spans residues 1–52 (MEDPGETGAHPLGATNLNFVPGHQQKEKPSTDPLYDTPDTRGVQAGGSQQPA). The residue at position 35 (tyrosine 35) is a Phosphotyrosine; by ABL1 and ABL2. Residues 68 to 151 (WLQLRANAAA…QLICGYCRTR (84 aa)) form the SH2 domain. Disordered regions lie at residues 177–200 (LNTK…RSPQ), 238–273 (STET…PPRQ), and 301–331 (QEVD…RPRH). 4 positions are modified to phosphoserine: serine 198, serine 246, serine 319, and serine 323. The span at 245 to 257 (LSPPAVPPPPVPV) shows a compositional bias: pro residues. A compositionally biased stretch (low complexity) spans 316-326 (SSGSPTTSPRL). Phosphoserine; by PKD/PRKD1 is present on serine 340. A VPS9 domain is found at 445–587 (LSADGSLGRL…LSGLSQARAL (143 aa)). Position 598 is a phosphoserine (serine 598). One can recognise a Ras-associating domain in the interval 613-695 (FQHLLRVAYQ…GYLIYRRAER (83 aa)). Arginine 681 carries the post-translational modification Omega-N-methylarginine. The segment at 698 to 763 (TQGAVAEKAK…KAEGSQALEE (66 aa)) is disordered. The span at 727 to 755 (REGKPRIAVDQEGKDQARGGHIGPEEQKA) shows a compositional bias: basic and acidic residues.

This sequence belongs to the RIN (Ras interaction/interference) family. Interacts with the GTP-bound form of Ras proteins (NRAS, HRAS and KRAS). This interaction prevents the association between RAF1 and Ras. Interacts with 14-3-3 proteins YWHAB, YWHAE and YWHAZ when phosphorylated on Ser-340. Interacts with the SH3 domain of ABL1 and ABL2. Interacts with RAB5A. The interaction with Ras is probably regulated and antagonized by the interaction with 14-3-3 proteins. The interaction with 14-3-3 proteins is regulated by phosphorylation on Ser-340. Phosphorylated on tyrosine residues by ABL1 and ABL2. Phosphorylation at Ser-340 by PRKD1 induces interaction with 14-3-3 proteins. Highly expressed in brain. Weakly or no expressed in other tissues, except in testis, where it is expressed at intermediate level. In brain, it is mainly expressed in postnatal forebrain neurons in which it is localized in dendrites and colocalizes with Ras.

Its subcellular location is the cytoplasm. It localises to the membrane. The protein localises to the cytoskeleton. Ras effector protein, which may serve as an inhibitory modulator of neuronal plasticity in aversive memory formation. Can affect Ras signaling at different levels. First, by competing with RAF1 protein for binding to activated Ras. Second, by enhancing signaling from ABL1 and ABL2, which regulate cytoskeletal remodeling. Third, by activating RAB5A, possibly by functioning as a guanine nucleotide exchange factor (GEF) for RAB5A, by exchanging bound GDP for free GTP, and facilitating Ras-activated receptor endocytosis. In Mus musculus (Mouse), this protein is Ras and Rab interactor 1 (Rin1).